The chain runs to 208 residues: Guanylate kinase (208 aa).

The 178-residue stretch at 4–181 (GLLIVISGPS…AVEKIQSIIS (178 aa)) folds into the Guanylate kinase-like domain. ATP is bound at residue 11–18 (GPSGTGKG).

The protein belongs to the guanylate kinase family.

The protein resides in the cytoplasm. The enzyme catalyses GMP + ATP = GDP + ADP. Essential for recycling GMP and indirectly, cGMP. The chain is Guanylate kinase from Clostridium tetani (strain Massachusetts / E88).